A 306-amino-acid polypeptide reads, in one-letter code: tRNA dimethylallyltransferase 2 (306 aa).

Position 11–18 (Gly11–Thr18) interacts with ATP. A substrate-binding site is contributed by Thr13–Thr18. The tract at residues Asp36 to Gln39 is interaction with substrate tRNA.

It belongs to the IPP transferase family. Monomer. Mg(2+) is required as a cofactor.

The catalysed reaction is adenosine(37) in tRNA + dimethylallyl diphosphate = N(6)-dimethylallyladenosine(37) in tRNA + diphosphate. Functionally, catalyzes the transfer of a dimethylallyl group onto the adenine at position 37 in tRNAs that read codons beginning with uridine, leading to the formation of N6-(dimethylallyl)adenosine (i(6)A). The chain is tRNA dimethylallyltransferase 2 from Bacteroides fragilis (strain ATCC 25285 / DSM 2151 / CCUG 4856 / JCM 11019 / LMG 10263 / NCTC 9343 / Onslow / VPI 2553 / EN-2).